A 430-amino-acid polypeptide reads, in one-letter code: Asparagine--tRNA ligase (430 aa).

The protein belongs to the class-II aminoacyl-tRNA synthetase family. As to quaternary structure, homodimer.

The protein localises to the cytoplasm. The enzyme catalyses tRNA(Asn) + L-asparagine + ATP = L-asparaginyl-tRNA(Asn) + AMP + diphosphate + H(+). The chain is Asparagine--tRNA ligase from Listeria innocua serovar 6a (strain ATCC BAA-680 / CLIP 11262).